The following is a 326-amino-acid chain: Biotin synthase (326 aa).

The 225-residue stretch at 51–275 (NAVQRSTLLS…MMPTSFVRLS (225 aa)) folds into the Radical SAM core domain. [4Fe-4S] cluster is bound by residues C66, C70, and C73. [2Fe-2S] cluster-binding residues include C110, C141, C201, and R273.

It belongs to the radical SAM superfamily. Biotin synthase family. Homodimer. [4Fe-4S] cluster is required as a cofactor. The cofactor is [2Fe-2S] cluster.

It carries out the reaction (4R,5S)-dethiobiotin + (sulfur carrier)-SH + 2 reduced [2Fe-2S]-[ferredoxin] + 2 S-adenosyl-L-methionine = (sulfur carrier)-H + biotin + 2 5'-deoxyadenosine + 2 L-methionine + 2 oxidized [2Fe-2S]-[ferredoxin]. Its pathway is cofactor biosynthesis; biotin biosynthesis; biotin from 7,8-diaminononanoate: step 2/2. Functionally, catalyzes the conversion of dethiobiotin (DTB) to biotin by the insertion of a sulfur atom into dethiobiotin via a radical-based mechanism. In Aromatoleum aromaticum (strain DSM 19018 / LMG 30748 / EbN1) (Azoarcus sp. (strain EbN1)), this protein is Biotin synthase.